The sequence spans 434 residues: Monodehydroascorbate reductase, seedling isozyme (434 aa).

FAD contacts are provided by residues 13 to 16 (GGVA), Glu-40, Arg-47, Lys-52, Ile-95, and 146 to 147 (RE). NAD(+)-binding positions include 171-177 (GGYIGLE), Glu-195, Arg-201, and Gly-260. Position 173–177 (173–177 (YIGLE)) interacts with NADP(+). NADP(+) is bound by residues Arg-201 and Gly-260. Asp-297 is a binding site for FAD. 313 to 314 (EH) contacts NAD(+). 313–314 (EH) is an NADP(+) binding site. Val-315 provides a ligand contact to FAD. Arg-319 is an L-ascorbate binding site. Tyr-348 is a binding site for FAD. Tyr-348 serves as a coordination point for NAD(+). Tyr-348 is an NADP(+) binding site. Arg-350 lines the L-ascorbate pocket.

It belongs to the FAD-dependent oxidoreductase family. FAD is required as a cofactor.

Its subcellular location is the cytoplasm. It carries out the reaction 2 monodehydro-L-ascorbate radical + NADH + H(+) = 2 L-ascorbate + NAD(+). Catalyzes the conversion of monodehydroascorbate to ascorbate, oxidizing NADH in the process. This Cucumis sativus (Cucumber) protein is Monodehydroascorbate reductase, seedling isozyme.